Here is a 144-residue protein sequence, read N- to C-terminus: MRLNTISPAEGSKPTGKRSGRGIGSGLGKTGGVGHKGQKSRSGGRVKPGFEGGQMPIQRRLPKFGFTSRKSFVTDQVTLAEIAKVDGDTASLETLKAAGLVKKEIQFVKVVKSGEVSRAVTVSGLKVTKGAKEAIEAAGGKVEE.

A disordered region spans residues 1-59; that stretch reads MRLNTISPAEGSKPTGKRSGRGIGSGLGKTGGVGHKGQKSRSGGRVKPGFEGGQMPIQR. Residues 21–35 show a composition bias toward gly residues; the sequence is RGIGSGLGKTGGVGH.

The protein belongs to the universal ribosomal protein uL15 family. In terms of assembly, part of the 50S ribosomal subunit.

Its function is as follows. Binds to the 23S rRNA. This chain is Large ribosomal subunit protein uL15, found in Alteromonas mediterranea (strain DSM 17117 / CIP 110805 / LMG 28347 / Deep ecotype).